Here is a 561-residue protein sequence, read N- to C-terminus: MITAALHEPQIHKPTDTSVVSDDVLPHSPPTPRIFRSKLPDIDIPNHLPLHTYCFEKLSSVSDKPCLIVGSTGKSYTYGETHLICRRVASGLYKLGIRKGDVIMILLQNSAEFVFSFMGASMIGAVSTTANPFYTSQELYKQLKSSGAKLIITHSQYVDKLKNLGENLTLITTDEPTPENCLPFSTLITDDETNPFQETVDIGGDDAAALPFSSGTTGLPKGVVLTHKSLITSVAQQVDGDNPNLYLKSNDVILCVLPLFHIYSLNSVLLNSLRSGATVLLMHKFEIGALLDLIQRHRVTIAALVPPLVIALAKNPTVNSYDLSSVRFVLSGAAPLGKELQDSLRRRLPQAILGQGYGMTEAGPVLSMSLGFAKEPIPTKSGSCGTVVRNAELKVVHLETRLSLGYNQPGEICIRGQQIMKEYLNDPEATSATIDEEGWLHTGDIGYVDEDDEIFIVDRLKEVIKFKGFQVPPAELESLLINHHSIADAAVVPQNDEVAGEVPVAFVVRSNGNDITEEDVKEYVAKQVVFYKRLHKVFFVASIPKSPSGKILRKDLKAKLC.

Residues Ser213, Ser214, Gly215, Thr216, Thr217, and Lys221 each contribute to the ATP site. Residues Tyr263 and Ser267 each contribute to the (E)-4-coumaroyl-AMP site. Residue Lys284 coordinates CoA. An SBD1 region spans residues 286–355 (EIGALLDLIQ…RRLPQAILGQ (70 aa)). (E)-4-coumaroyl-AMP contacts are provided by Ala333, Gln355, Gly356, Thr360, and Met368. 3 residues coordinate ATP: Gln355, Gly356, and Thr360. The segment at 356–423 (GYGMTEAGPV…IRGQQIMKEY (68 aa)) is SBD2. The ATP site is built by Asp444 and Arg459. The (E)-4-coumaroyl-AMP site is built by Lys461 and Lys465. 2 residues coordinate CoA: Lys467 and Gly468. Lys550 lines the ATP pocket.

Belongs to the ATP-dependent AMP-binding enzyme family. Mg(2+) is required as a cofactor. Preferentially expressed in leaves, flowers and siliques.

It catalyses the reaction (E)-4-coumarate + ATP + CoA = (E)-4-coumaroyl-CoA + AMP + diphosphate. The catalysed reaction is (E)-caffeate + ATP + CoA = (E)-caffeoyl-CoA + AMP + diphosphate. The enzyme catalyses (E)-ferulate + ATP + CoA = (E)-feruloyl-CoA + AMP + diphosphate. It carries out the reaction (E)-4-coumarate + ATP + H(+) = (E)-4-coumaroyl-AMP + diphosphate. It catalyses the reaction (E)-4-coumaroyl-AMP + CoA = (E)-4-coumaroyl-CoA + AMP + H(+). The catalysed reaction is (E)-caffeate + ATP + H(+) = (E)-caffeoyl-AMP + diphosphate. The enzyme catalyses (E)-caffeoyl-AMP + CoA = (E)-caffeoyl-CoA + AMP + H(+). It carries out the reaction (E)-ferulate + ATP + H(+) = (E)-feruloyl-AMP + diphosphate. It catalyses the reaction (E)-feruloyl-AMP + CoA = (E)-feruloyl-CoA + AMP + H(+). It participates in phytoalexin biosynthesis; 3,4',5-trihydroxystilbene biosynthesis; 3,4',5-trihydroxystilbene from trans-4-coumarate: step 1/2. Functionally, produces CoA thioesters of a variety of hydroxy- and methoxy-substituted cinnamic acids, which are used to synthesize several phenylpropanoid-derived compounds, including anthocyanins, flavonoids, isoflavonoids, coumarins, lignin, suberin and wall-bound phenolics. Follows a two-step reaction mechanism, wherein the carboxylate substrate first undergoes adenylation by ATP, followed by a thioesterification in the presence of CoA to yield the final CoA thioesters. This Arabidopsis thaliana (Mouse-ear cress) protein is 4-coumarate--CoA ligase 3.